We begin with the raw amino-acid sequence, 363 residues long: Regulator of G-protein signaling rgs-3 (363 aa).

Residues 1-70 form a disordered region; that stretch reads MWRSYKAETP…NSSATSPTPS (70 aa). Residues 21–35 show a composition bias toward basic and acidic residues; sequence LNLHDSSESDHEGRQ. Composition is skewed to low complexity over residues 36–50 and 58–70; these read SRSA…APAS and PITN…PTPS. 2 RGS domains span residues 112–225 and 240–359; these read NCAN…LEYL and SFEG…IDLL.

Post-translationally, may be phosphorylated and activated by egl-4.

Functionally, modulates chemotaxis responses by regulating positively the sensitivity to CO2 levels in BAG neurons and by regulating negatively the sensitivity to quinine in ASH sensory neurons. In Caenorhabditis elegans, this protein is Regulator of G-protein signaling rgs-3 (rgs-3).